Here is a 94-residue protein sequence, read N- to C-terminus: Small ribosomal subunit protein bS18 (94 aa).

Residues 1-12 are compositionally biased toward low complexity; the sequence is MSEQNSRPQNSE. The tract at residues 1–29 is disordered; sequence MSEQNSRPQNSERPQRSRRPQGGPRRRRK. Residues 16–29 are compositionally biased toward basic residues; sequence RSRRPQGGPRRRRK.

Belongs to the bacterial ribosomal protein bS18 family. As to quaternary structure, part of the 30S ribosomal subunit. Forms a tight heterodimer with protein bS6.

Functionally, binds as a heterodimer with protein bS6 to the central domain of the 16S rRNA, where it helps stabilize the platform of the 30S subunit. The chain is Small ribosomal subunit protein bS18 from Leuconostoc mesenteroides subsp. mesenteroides (strain ATCC 8293 / DSM 20343 / BCRC 11652 / CCM 1803 / JCM 6124 / NCDO 523 / NBRC 100496 / NCIMB 8023 / NCTC 12954 / NRRL B-1118 / 37Y).